Reading from the N-terminus, the 219-residue chain is Cytidylate kinase (219 aa).

Glycine 9–threonine 17 contributes to the ATP binding site.

It belongs to the cytidylate kinase family. Type 1 subfamily.

It is found in the cytoplasm. The enzyme catalyses CMP + ATP = CDP + ADP. It carries out the reaction dCMP + ATP = dCDP + ADP. This Fervidobacterium nodosum (strain ATCC 35602 / DSM 5306 / Rt17-B1) protein is Cytidylate kinase.